Consider the following 447-residue polypeptide: Argininosuccinate synthase (447 aa).

Residues 17–25 and alanine 43 each bind ATP; that span reads AFSGGLDTS. L-citrulline is bound at residue tyrosine 99. ATP contacts are provided by glycine 129 and threonine 131. Positions 131, 135, and 136 each coordinate L-aspartate. Asparagine 135 contacts L-citrulline. ATP is bound at residue aspartate 136. Residues arginine 139 and serine 192 each contribute to the L-citrulline site. Aspartate 194 provides a ligand contact to ATP. Threonine 201, glutamate 203, and glutamate 280 together coordinate L-citrulline.

This sequence belongs to the argininosuccinate synthase family. Type 2 subfamily. As to quaternary structure, homotetramer.

It localises to the cytoplasm. The enzyme catalyses L-citrulline + L-aspartate + ATP = 2-(N(omega)-L-arginino)succinate + AMP + diphosphate + H(+). Its pathway is amino-acid biosynthesis; L-arginine biosynthesis; L-arginine from L-ornithine and carbamoyl phosphate: step 2/3. The polypeptide is Argininosuccinate synthase (Paracidovorax citrulli (strain AAC00-1) (Acidovorax citrulli)).